The primary structure comprises 282 residues: Polyamine aminopropyltransferase (282 aa).

The PABS domain maps to I11–K239. Q36 is a binding site for S-methyl-5'-thioadenosine. H67 and D91 together coordinate spermidine. Residues E111 and D142–G143 contribute to the S-methyl-5'-thioadenosine site. D160 (proton acceptor) is an active-site residue. D160 to D163 is a binding site for spermidine. P167 provides a ligand contact to S-methyl-5'-thioadenosine.

This sequence belongs to the spermidine/spermine synthase family. In terms of assembly, homodimer or homotetramer.

It is found in the cytoplasm. The enzyme catalyses S-adenosyl 3-(methylsulfanyl)propylamine + putrescine = S-methyl-5'-thioadenosine + spermidine + H(+). Its pathway is amine and polyamine biosynthesis; spermidine biosynthesis; spermidine from putrescine: step 1/1. Its function is as follows. Catalyzes the irreversible transfer of a propylamine group from the amino donor S-adenosylmethioninamine (decarboxy-AdoMet) to putrescine (1,4-diaminobutane) to yield spermidine. This chain is Polyamine aminopropyltransferase, found in Thermococcus onnurineus (strain NA1).